A 459-amino-acid polypeptide reads, in one-letter code: mRNA-capping enzyme subunit alpha (459 aa).

Lys-70 serves as the catalytic N6-GMP-lysine intermediate. Residues 415-459 (MAGGSGRPLPSQSQNATLSTSKPVHSQPPSNDKEPKYVDEDDWSD) are disordered. Over residues 424 to 444 (PSQSQNATLSTSKPVHSQPPS) the composition is skewed to polar residues.

It belongs to the eukaryotic GTase family. Heterodimer. The mRNA-capping enzyme is composed of two separate chains alpha and beta, respectively a mRNA guanylyltransferase and an mRNA 5'-triphosphate monophosphatase.

The protein localises to the nucleus. It catalyses the reaction a 5'-end diphospho-ribonucleoside in mRNA + GTP + H(+) = a 5'-end (5'-triphosphoguanosine)-ribonucleoside in mRNA + diphosphate. Second step of mRNA capping. Transfer of the GMP moiety of GTP to the 5'-diphosphate terminus of RNA via a covalent enzyme-GMP reaction intermediate. This is mRNA-capping enzyme subunit alpha (CEG1) from Saccharomyces cerevisiae (strain ATCC 204508 / S288c) (Baker's yeast).